Here is a 295-residue protein sequence, read N- to C-terminus: Cytidine deaminase (295 aa).

2 CMP/dCMP-type deaminase domains span residues 48–168 (SDKE…FGPA) and 187–295 (DDKD…FVNV). 89–91 (NME) provides a ligand contact to substrate. A Zn(2+)-binding site is contributed by His102. The Proton donor role is filled by Glu104. Cys129 and Cys132 together coordinate Zn(2+).

Belongs to the cytidine and deoxycytidylate deaminase family. In terms of assembly, homodimer. The cofactor is Zn(2+).

It catalyses the reaction cytidine + H2O + H(+) = uridine + NH4(+). The catalysed reaction is 2'-deoxycytidine + H2O + H(+) = 2'-deoxyuridine + NH4(+). This enzyme scavenges exogenous and endogenous cytidine and 2'-deoxycytidine for UMP synthesis. This is Cytidine deaminase from Vibrio parahaemolyticus serotype O3:K6 (strain RIMD 2210633).